A 456-amino-acid chain; its full sequence is Glutamate--tRNA ligase 2 (456 aa).

Positions 8–18 (PSPTGYIHIGN) match the 'HIGH' region motif. Residues 249–253 (GLSKR) carry the 'KMSKS' region motif. Position 252 (Lys252) interacts with ATP.

It belongs to the class-I aminoacyl-tRNA synthetase family. Glutamate--tRNA ligase type 1 subfamily. Monomer.

The protein resides in the cytoplasm. The enzyme catalyses tRNA(Glu) + L-glutamate + ATP = L-glutamyl-tRNA(Glu) + AMP + diphosphate. Catalyzes the attachment of glutamate to tRNA(Glu) in a two-step reaction: glutamate is first activated by ATP to form Glu-AMP and then transferred to the acceptor end of tRNA(Glu). The chain is Glutamate--tRNA ligase 2 from Bartonella bacilliformis (strain ATCC 35685 / KC583 / Herrer 020/F12,63).